The chain runs to 418 residues: rRNA methyltransferase 3, mitochondrial (418 aa).

The N-terminal 40 residues, 1–40 (MAAPAKGMWCSLGSLLRVVQTRDLNARRWVRALRRSPVRV), are a transit peptide targeting the mitochondrion. Residues 41-90 (LSPSGQVEERKRAPDQQPRKAVPKASSQGQRQKQPLETSPSQTPHTWEEA) form a disordered region. The segment covering 47-58 (VEERKRAPDQQP) has biased composition (basic and acidic residues). Polar residues predominate over residues 65-85 (ASSQGQRQKQPLETSPSQTPH). Gly354, Ile378, and Leu387 together coordinate S-adenosyl-L-methionine.

It belongs to the class IV-like SAM-binding methyltransferase superfamily. RNA methyltransferase TrmH family.

Its subcellular location is the mitochondrion. It carries out the reaction guanosine(1370) in 16S rRNA + S-adenosyl-L-methionine = 2'-O-methylguanosine(1370) in 16S rRNA + S-adenosyl-L-homocysteine + H(+). In terms of biological role, S-adenosyl-L-methionine-dependent 2'-O-ribose methyltransferase that catalyzes the formation of 2'-O-methylguanosine at position 1370 (Gm1370) in the 16S mitochondrial large subunit ribosomal RNA (mtLSU rRNA), a conserved modification in the peptidyl transferase domain of the mtLSU rRNA. Also required for formation of 2'-O-methyluridine at position 1369 (Um1369) mediated by MRM2. This Mus musculus (Mouse) protein is rRNA methyltransferase 3, mitochondrial.